Here is a 396-residue protein sequence, read N- to C-terminus: Elongation factor Tu (396 aa).

Positions lysine 10–glutamate 205 constitute a tr-type G domain. The interval glycine 19 to threonine 26 is G1. Glycine 19–threonine 26 serves as a coordination point for GTP. Threonine 26 is a Mg(2+) binding site. The tract at residues glycine 61 to serine 65 is G2. A G3 region spans residues aspartate 82 to glycine 85. GTP-binding positions include aspartate 82 to histidine 86 and asparagine 137 to aspartate 140. The G4 stretch occupies residues asparagine 137 to aspartate 140. The interval serine 175–leucine 177 is G5.

The protein belongs to the TRAFAC class translation factor GTPase superfamily. Classic translation factor GTPase family. EF-Tu/EF-1A subfamily. Monomer.

It localises to the cytoplasm. It catalyses the reaction GTP + H2O = GDP + phosphate + H(+). GTP hydrolase that promotes the GTP-dependent binding of aminoacyl-tRNA to the A-site of ribosomes during protein biosynthesis. The sequence is that of Elongation factor Tu from Bacillus licheniformis (strain ATCC 14580 / DSM 13 / JCM 2505 / CCUG 7422 / NBRC 12200 / NCIMB 9375 / NCTC 10341 / NRRL NRS-1264 / Gibson 46).